The primary structure comprises 510 residues: 2-isopropylmalate synthase (510 aa).

Residues 5 to 267 (LIIFDTTLRD…DTRIDSVHIV (263 aa)) enclose the Pyruvate carboxyltransferase domain. 4 residues coordinate Mn(2+): aspartate 14, histidine 202, histidine 204, and asparagine 238. The segment at 392-510 (KLLSLTAHSE…SKLERAHPQV (119 aa)) is regulatory domain.

The protein belongs to the alpha-IPM synthase/homocitrate synthase family. LeuA type 1 subfamily. As to quaternary structure, homodimer. It depends on Mn(2+) as a cofactor.

It is found in the cytoplasm. The catalysed reaction is 3-methyl-2-oxobutanoate + acetyl-CoA + H2O = (2S)-2-isopropylmalate + CoA + H(+). The protein operates within amino-acid biosynthesis; L-leucine biosynthesis; L-leucine from 3-methyl-2-oxobutanoate: step 1/4. Its function is as follows. Catalyzes the condensation of the acetyl group of acetyl-CoA with 3-methyl-2-oxobutanoate (2-ketoisovalerate) to form 3-carboxy-3-hydroxy-4-methylpentanoate (2-isopropylmalate). This is 2-isopropylmalate synthase from Nitrosospira multiformis (strain ATCC 25196 / NCIMB 11849 / C 71).